The sequence spans 103 residues: Cell division protein FtsB (103 aa).

Residues 1–3 lie on the Cytoplasmic side of the membrane; it reads MGK. Residues 4–21 form a helical membrane-spanning segment; sequence LTLLLLAILVWLQYSLWF. The Periplasmic segment spans residues 22-103; that stretch reads GKNGIHDYSR…RAQTAGQNNR (82 aa). The stretch at 31–71 forms a coiled coil; it reads RVNDDVAAQQATNAKLKARNDQLFAEIDDLNGGQEALEERA.

This sequence belongs to the FtsB family. In terms of assembly, part of a complex composed of FtsB, FtsL and FtsQ.

The protein resides in the cell inner membrane. Its function is as follows. Essential cell division protein. May link together the upstream cell division proteins, which are predominantly cytoplasmic, with the downstream cell division proteins, which are predominantly periplasmic. This chain is Cell division protein FtsB, found in Escherichia fergusonii (strain ATCC 35469 / DSM 13698 / CCUG 18766 / IAM 14443 / JCM 21226 / LMG 7866 / NBRC 102419 / NCTC 12128 / CDC 0568-73).